A 242-amino-acid chain; its full sequence is MIGQRDTVNGAHFGFTDRWGGVSAVPYEELNLGGAVGDDPGAVTANRELAAKSLGVDPARVVWMNQVHGADVAVVDAPWGDRPVPRVDAVVTAERGLALAVLTADCVPVLLADPVSGVAAAAHAGRPGLVAGVVPAAVRAMAELGADPARIVARTGPAVCGRCYEVPEEMRAEVAAVEPAAYAETGWGTPALDVSAGVHAQLERLGVHDRAQSPVCTRESADHFSYRRDRTTGRLAGYVWLD.

Zn(2+) contacts are provided by His68, Cys106, and His123.

Belongs to the purine nucleoside phosphorylase YfiH/LACC1 family. As to quaternary structure, homodimer. Cu(2+) serves as cofactor. Requires Zn(2+) as cofactor.

It carries out the reaction adenosine + phosphate = alpha-D-ribose 1-phosphate + adenine. The catalysed reaction is S-methyl-5'-thioadenosine + phosphate = 5-(methylsulfanyl)-alpha-D-ribose 1-phosphate + adenine. The enzyme catalyses inosine + phosphate = alpha-D-ribose 1-phosphate + hypoxanthine. It catalyses the reaction adenosine + H2O + H(+) = inosine + NH4(+). Functionally, purine nucleoside enzyme that catalyzes the phosphorolysis of adenosine and inosine nucleosides, yielding D-ribose 1-phosphate and the respective free bases, adenine and hypoxanthine. Also catalyzes the phosphorolysis of S-methyl-5'-thioadenosine into adenine and S-methyl-5-thio-alpha-D-ribose 1-phosphate. Also has adenosine deaminase activity. This Streptomyces coelicolor (strain ATCC BAA-471 / A3(2) / M145) protein is Purine nucleoside phosphorylase SCO2081.